The following is a 92-amino-acid chain: C-C motif chemokine 4 (92 aa).

A signal peptide spans 1–23 (MKLGVTVLSVALLVAALCPPALS). 2 disulfide bridges follow: Cys-34-Cys-58 and Cys-35-Cys-74.

The protein belongs to the intercrine beta (chemokine CC) family. As to quaternary structure, homodimer.

It localises to the secreted. Its function is as follows. Monokine with inflammatory and chemokinetic properties. The sequence is that of C-C motif chemokine 4 (CCL4) from Oryctolagus cuniculus (Rabbit).